Consider the following 386-residue polypeptide: Ovalbumin (386 aa).

Residue glycine 2 is modified to N-acetylglycine. Residues 22–48 (HHANENIFYSPFTIISALAMVYLGAKD) constitute a signal peptide (not cleaved). Serine 69 carries the post-translational modification Phosphoserine. An intrachain disulfide couples cysteine 74 to cysteine 121. N-linked (GlcNAc...) asparagine glycosylation is found at asparagine 293 and asparagine 312. At serine 345 the chain carries Phosphoserine. Asparagine 372 is a glycosylation site (N-linked (GlcNAc...) asparagine).

This sequence belongs to the serpin family. Ov-serpin subfamily. Post-translationally, the signal sequence is not cleaved. The functional signal for membrane translocation of ovalbumin becomes accessible when the nascent chain is 50 to 60 residues long. The hydrophobic sequence which lies between residues 27 and 43 folds back on the preceding residues to form an amphipathic hairpin structure which is the signal element recognized by the membrane. In terms of tissue distribution, major protein of egg white.

The protein resides in the secreted. Its function is as follows. Storage protein of egg white. Lack protease inhibitory activity. In Meleagris gallopavo (Wild turkey), this protein is Ovalbumin (SERPINB14).